The following is a 243-amino-acid chain: Urease accessory protein UreF 2 (243 aa).

It belongs to the UreF family. As to quaternary structure, ureD, UreF and UreG form a complex that acts as a GTP-hydrolysis-dependent molecular chaperone, activating the urease apoprotein by helping to assemble the nickel containing metallocenter of UreC. The UreE protein probably delivers the nickel.

The protein resides in the cytoplasm. Functionally, required for maturation of urease via the functional incorporation of the urease nickel metallocenter. This Brucella suis (strain ATCC 23445 / NCTC 10510) protein is Urease accessory protein UreF 2.